Consider the following 262-residue polypeptide: (5R,7aS)-5-hydroxy-7a-methyl-1-oxo-2,3,5,6,7,7a-hexahydro-1H-indene-carboxyl-CoA reductase (262 aa).

The NAD(+) site is built by D50, D77, V78, N104, Y170, K174, and A203. Y170 acts as the Proton acceptor in catalysis.

The protein belongs to the short-chain dehydrogenases/reductases (SDR) family.

The catalysed reaction is (5R,7aS)-5-hydroxy-7a-methyl-1-oxo-2,3,5,6,7,7a-hexahydro-1H-indene-carboxyl-CoA + NAD(+) = (7aS)-7a-methyl-1,5-dioxo-2,3,5,6,7,7a-hexahydro-1H-indene-carboxyl-CoA + NADH + H(+). It participates in steroid metabolism; cholesterol degradation. Requires the presence of IpdC. Its function is as follows. Involved in the final steps of cholesterol and steroid degradation. Probably catalyzes the oxidation of the 5-OH group of (5R,7aS)-5-hydroxy-7a-methyl-1-oxo-2,3,5,6,7,7a-hexahydro-1H-indene-carboxyl-CoA, leading to the formation of HIEC-CoA. In Mycobacterium tuberculosis (strain ATCC 25618 / H37Rv), this protein is (5R,7aS)-5-hydroxy-7a-methyl-1-oxo-2,3,5,6,7,7a-hexahydro-1H-indene-carboxyl-CoA reductase.